The following is a 155-amino-acid chain: V-type proton ATPase 16 kDa proteolipid subunit c (155 aa).

Residues 1–10 are Lumenal-facing; that stretch reads MSEAKNGPEY. Residues 11–33 form a helical membrane-spanning segment; the sequence is ASFFAVMGASAAMVFSALGAAYG. The Cytoplasmic portion of the chain corresponds to 34 to 55; that stretch reads TAKSGTGIAAMSVMRPEMIMKS. Residues 56–76 form a helical membrane-spanning segment; the sequence is IIPVVMAGIIAIYGLVVAVLI. Residues 77–92 are Lumenal-facing; the sequence is ANSLNDGISLYRSFLQ. A helical membrane pass occupies residues 93-114; the sequence is LGAGLSVGLSGLAAGFAIGIVG. Topologically, residues 115–131 are cytoplasmic; that stretch reads DAGVRGTAQQPRLFVGM. The helical transmembrane segment at 132-152 threads the bilayer; it reads ILILIFAEVLGLYGLIVALIL. Topologically, residues 153–155 are lumenal; it reads STK.

Belongs to the V-ATPase proteolipid subunit family. As to quaternary structure, V-ATPase is a heteromultimeric enzyme made up of two complexes: the ATP-hydrolytic V1 complex and the proton translocation V0 complex. The V1 complex consists of three catalytic AB heterodimers that form a heterohexamer, three peripheral stalks each consisting of EG heterodimers, one central rotor including subunits D and F, and the regulatory subunits C and H. The proton translocation complex V0 consists of the proton transport subunit a, a ring of proteolipid subunits c9c'', rotary subunit d, subunits e and f, and the accessory subunits ATP6AP1/Ac45 and ATP6AP2/PRR. Interacts with the V0 complex V-ATPase subunit a4 ATP6V0A4. Interacts with LASS2. Interacts with RNF182; this interaction leads to ubiquitination and degradation via the proteasome pathway. Post-translationally, ubiquitinated by RNF182, leading to its degradation via the ubiquitin-proteasome pathway. In terms of tissue distribution, expressed in brain (at protein level).

The protein localises to the cytoplasmic vesicle. It is found in the clathrin-coated vesicle membrane. It localises to the secretory vesicle. The protein resides in the synaptic vesicle membrane. Proton-conducting pore forming subunit of the V0 complex of vacuolar(H+)-ATPase (V-ATPase), a multisubunit enzyme composed of a peripheral complex (V1) that hydrolyzes ATP and a membrane integral complex (V0) that translocates protons. V-ATPase is responsible for acidifying and maintaining the pH of intracellular compartments and in some cell types, is targeted to the plasma membrane, where it is responsible for acidifying the extracellular environment. This Bos taurus (Bovine) protein is V-type proton ATPase 16 kDa proteolipid subunit c (ATP6V0C).